A 74-amino-acid chain; its full sequence is MLCLPVFIILLLLASPAAPNPLETRIQRDLIRAALEDADMKTNERFLEGVISTIKDFAGKVCCSVSVNFCCPTA.

The signal sequence occupies residues 1 to 19 (MLCLPVFIILLLLASPAAP). A propeptide spanning residues 20-60 (NPLETRIQRDLIRAALEDADMKTNERFLEGVISTIKDFAGK) is cleaved from the precursor.

This sequence belongs to the conotoxin T superfamily. In terms of processing, contains 2 disulfide bonds that can be either 'C1-C3, C2-C4' or 'C1-C4, C2-C3', since these disulfide connectivities have been observed for conotoxins with cysteine framework V (for examples, see AC P0DQQ7 and AC P81755). Expressed by the venom duct.

It is found in the secreted. The sequence is that of Conotoxin TsMLCL-04 from Conus tessulatus (Tessellate cone).